A 271-amino-acid polypeptide reads, in one-letter code: Tryptophan synthase alpha chain (271 aa).

Residues glutamate 49 and aspartate 60 each act as proton acceptor in the active site.

The protein belongs to the TrpA family. In terms of assembly, tetramer of two alpha and two beta chains.

The catalysed reaction is (1S,2R)-1-C-(indol-3-yl)glycerol 3-phosphate + L-serine = D-glyceraldehyde 3-phosphate + L-tryptophan + H2O. It functions in the pathway amino-acid biosynthesis; L-tryptophan biosynthesis; L-tryptophan from chorismate: step 5/5. In terms of biological role, the alpha subunit is responsible for the aldol cleavage of indoleglycerol phosphate to indole and glyceraldehyde 3-phosphate. The chain is Tryptophan synthase alpha chain from Leptothrix cholodnii (strain ATCC 51168 / LMG 8142 / SP-6) (Leptothrix discophora (strain SP-6)).